The sequence spans 122 residues: Large ribosomal subunit protein uL18 (122 aa).

This sequence belongs to the universal ribosomal protein uL18 family. As to quaternary structure, part of the 50S ribosomal subunit; part of the 5S rRNA/L5/L18/L25 subcomplex. Contacts the 5S and 23S rRNAs.

In terms of biological role, this is one of the proteins that bind and probably mediate the attachment of the 5S RNA into the large ribosomal subunit, where it forms part of the central protuberance. This is Large ribosomal subunit protein uL18 from Desulfatibacillum aliphaticivorans.